Reading from the N-terminus, the 446-residue chain is Palmitoyltransferase PFA4 (446 aa).

The Cytoplasmic segment spans residues 1-8 (MAVQLKWP). Residues 9 to 29 (ILGVIIPCIIIFSLSYGSHYF) form a helical membrane-spanning segment. At 30-40 (ILRHHLTMKQQ) the chain is on the lumenal side. A helical membrane pass occupies residues 41-61 (LIYEFYVTMIWISYLLAIYTN). Topologically, residues 62–161 (PGRVPKNYKP…GNNNLPHFMR (100 aa)) are cytoplasmic. Residues 114 to 164 (RYCKKCNNYKPPRSHHCKICQQCVLQMDHHCPWTLNCVGNNNLPHFMRFLG) enclose the DHHC domain. Cys144 functions as the S-palmitoyl cysteine intermediate in the catalytic mechanism. Residues 162 to 182 (FLGWIIWGTGYLMIQLIKLII) form a helical membrane-spanning segment. The Lumenal portion of the chain corresponds to 183-201 (NYYENSNMPHYLFNKTELV). The helical transmembrane segment at 202 to 222 (AIIAITPLNFFVFASILVLFI) threads the bilayer. Residues 223-446 (RCLINICKGM…TDFGVDEDSD (224 aa)) are Cytoplasmic-facing.

This sequence belongs to the DHHC palmitoyltransferase family. PFA4 subfamily.

The protein resides in the endoplasmic reticulum membrane. The enzyme catalyses L-cysteinyl-[protein] + hexadecanoyl-CoA = S-hexadecanoyl-L-cysteinyl-[protein] + CoA. Functionally, mediates the reversible addition of palmitate to target proteins, thereby regulating their membrane association and biological function. The polypeptide is Palmitoyltransferase PFA4 (Candida albicans (strain SC5314 / ATCC MYA-2876) (Yeast)).